The sequence spans 64 residues: Large ribosomal subunit protein uL29 (64 aa).

Belongs to the universal ribosomal protein uL29 family.

This is Large ribosomal subunit protein uL29 from Burkholderia mallei (strain NCTC 10247).